Here is a 179-residue protein sequence, read N- to C-terminus: MYPKAKATRVCSDAARINDLPDDLLATVLSFVPTKDAVATSILSKRWRPIWKRAVNLESDCVELCAICALDCFSFILMRSSKLRVLRFKQKRCCCNLLREKWKQPDFVPLSLYRSLEAFEWIGFKGREKTEKKAAFHILRNACNLKTMAITTSNTFQENTNILIDFDRMCTNCRISIKP.

Residues 14–60 form the F-box domain; that stretch reads AARINDLPDDLLATVLSFVPTKDAVATSILSKRWRPIWKRAVNLESD. Residues 101–152 form the FBD domain; sequence KWKQPDFVPLSLYRSLEAFEWIGFKGREKTEKKAAFHILRNACNLKTMAITT.

The sequence is that of Putative FBD-associated F-box protein At3g12840 from Arabidopsis thaliana (Mouse-ear cress).